The primary structure comprises 233 residues: Large ribosomal subunit protein uL1 (233 aa).

It belongs to the universal ribosomal protein uL1 family. In terms of assembly, part of the 50S ribosomal subunit.

Functionally, binds directly to 23S rRNA. Forms the L1 stalk. Unlike the case in the Thermus thermophilus 70S ribosome, this protein is not seen to block the exit path of the E site tRNA. It is clear that the protein in the structure is flexible however, so this is probably due to its position in these crystals. Protein L1 is also a translational repressor protein, it controls the translation of the L11 operon by binding to its mRNA. This is Large ribosomal subunit protein uL1 (rplA) from Deinococcus radiodurans (strain ATCC 13939 / DSM 20539 / JCM 16871 / CCUG 27074 / LMG 4051 / NBRC 15346 / NCIMB 9279 / VKM B-1422 / R1).